The following is a 208-amino-acid chain: Small ribosomal subunit protein uS4 (208 aa).

One can recognise an S4 RNA-binding domain in the interval 97–160 (SRLDNIVFRL…KKNDKIAEAL (64 aa)).

The protein belongs to the universal ribosomal protein uS4 family. As to quaternary structure, part of the 30S ribosomal subunit. Contacts protein S5. The interaction surface between S4 and S5 is involved in control of translational fidelity.

Its function is as follows. One of the primary rRNA binding proteins, it binds directly to 16S rRNA where it nucleates assembly of the body of the 30S subunit. With S5 and S12 plays an important role in translational accuracy. The chain is Small ribosomal subunit protein uS4 from Mesoplasma florum (strain ATCC 33453 / NBRC 100688 / NCTC 11704 / L1) (Acholeplasma florum).